Consider the following 104-residue polypeptide: UPF0147 protein MK1586 (104 aa).

This sequence belongs to the UPF0147 family.

The sequence is that of UPF0147 protein MK1586 from Methanopyrus kandleri (strain AV19 / DSM 6324 / JCM 9639 / NBRC 100938).